The following is a 945-amino-acid chain: Argonaute protein wago-1 (945 aa).

The span at 1–20 (MSPHPPQPHPPMPPMPPVTA) shows a compositional bias: pro residues. The interval 1–41 (MSPHPPQPHPPMPPMPPVTAPPGAMTPMPPVPADAQKLHQS) is disordered. Residues 322-432 (TVIQKLFDIT…FPAELMTVSR (111 aa)) enclose the PAZ domain. In terms of domain architecture, Piwi spans 636-899 (VKDGKRLTLE…PLYVANEYAK (264 aa)).

Belongs to the Argonaute family. WAGO subfamily. In terms of assembly, interacts with rde-12. Interacts with znfx-1. As to expression, enriched in sperm and oocytes.

Its subcellular location is the cytoplasmic granule. In terms of biological role, argonaute protein which is involved in the endogenous small interfering RNA (endo-siRNA) pathway. Interacts with secondary 22G-RNAs, which are RNA-dependent RNA polymerase-derived endo-siRNAs, typically 22 nucleotides in length with a 5'guanosine residue. In the germline, functions in a genome surveillance system to silence transposons and aberrant transcripts. This chain is Argonaute protein wago-1, found in Caenorhabditis elegans.